Consider the following 242-residue polypeptide: B-box zinc finger protein 20 (242 aa).

Zn(2+) is bound by residues Cys5, Cys8, Cys28, His33, Cys58, Cys61, Cys81, and His91. Residues 5–47 form a B box-type 1; atypical zinc finger; the sequence is CAVCDKEEASVFCCADEAALCNGCDRHVHFANKLAGKHLRFSL. The B box-type 2; atypical zinc finger occupies 58 to 100; that stretch reads CDICGERRALLFCQEDRAILCRECDIPIHQANEHTKKHNRFLL. Residues 112 to 153 form a disordered region; it reads YPRASNSNSAAAFGRAKTRPKSVSSEVPSSASNEVFTSSSST. Residues 133–153 show a composition bias toward low complexity; that stretch reads SVSSEVPSSASNEVFTSSSST.

Interacts with MED25 and COP1. In terms of processing, COP1-mediated ubiquitination and subsequent proteasomal degradation of BBX20 occurs in the dark.

It localises to the nucleus. Its function is as follows. Acts as a positive regulator of seedling photomorphogenesis. Plays a negative role in brassinosteroid responses. This chain is B-box zinc finger protein 20, found in Arabidopsis thaliana (Mouse-ear cress).